Consider the following 110-residue polypeptide: Small ribosomal subunit protein bS6 (110 aa).

The protein belongs to the bacterial ribosomal protein bS6 family.

Functionally, binds together with bS18 to 16S ribosomal RNA. In Aquifex aeolicus (strain VF5), this protein is Small ribosomal subunit protein bS6 (rpsF).